The sequence spans 110 residues: Cell cycle protein GpsB (110 aa).

The stretch at 32–73 (LDDVIKDYENYLEQIEKLQMENRRLQQALDKKESEASNVRNS) forms a coiled coil.

It belongs to the GpsB family. In terms of assembly, forms polymers through the coiled coil domains. Interacts with PBP1, MreC and EzrA.

The protein resides in the cytoplasm. In terms of biological role, divisome component that associates with the complex late in its assembly, after the Z-ring is formed, and is dependent on DivIC and PBP2B for its recruitment to the divisome. Together with EzrA, is a key component of the system that regulates PBP1 localization during cell cycle progression. Its main role could be the removal of PBP1 from the cell pole after pole maturation is completed. Also contributes to the recruitment of PBP1 to the division complex. Not essential for septum formation. This is Cell cycle protein GpsB from Streptococcus agalactiae serotype Ia (strain ATCC 27591 / A909 / CDC SS700).